A 637-amino-acid chain; its full sequence is Neutral ceramidase (637 aa).

His-34 is a binding site for Mg(2+). His-96 and His-204 together coordinate Zn(2+). Ser-256 serves as the catalytic Nucleophile. Positions 417 and 453 each coordinate Zn(2+). 3 residues coordinate Mg(2+): Asp-575, Asp-577, and Thr-580.

The protein belongs to the neutral ceramidase family. Zn(2+) is required as a cofactor. It depends on Mg(2+) as a cofactor.

It catalyses the reaction an N-acylsphing-4-enine + H2O = sphing-4-enine + a fatty acid. The enzyme catalyses an N-acylsphinganine + H2O = sphinganine + a fatty acid. The catalysed reaction is an N-acyl-(4R)-4-hydroxysphinganine + H2O = (4R)-hydroxysphinganine + a fatty acid. It carries out the reaction N-(9Z-octadecenoyl)-sphing-4-enine + H2O = sphing-4-enine + (9Z)-octadecenoate. It catalyses the reaction N-(hexanoyl)sphing-4-enine + H2O = hexanoate + sphing-4-enine. The enzyme catalyses N-hexadecanoylsphing-4-enine + H2O = sphing-4-enine + hexadecanoate. The catalysed reaction is N-octadecanoylsphing-4-enine + H2O = sphing-4-enine + octadecanoate. It carries out the reaction N-eicosanoyl-sphing-4-enine + H2O = eicosanoate + sphing-4-enine. It catalyses the reaction N-(15Z-tetracosenoyl)-sphing-4-enine + H2O = (15Z)-tetracosenoate + sphing-4-enine. The enzyme catalyses N-tetracosanoyl-sphing-4-enine + H2O = tetracosanoate + sphing-4-enine. Its activity is regulated as follows. 90% of activity is inhibited by nickel, zinc and calcium ions. Magnesium, cobalt, copper and manganese ions inhibit between 50 and 80% of activity. Its function is as follows. Catalyzes the cleavage of the N-acyl linkage of the ceramides (Cers) to yield sphingosine (Sph) and free fatty acid. Also catalyzes the synthesis of Cers from Sph and fatty acid. Cers containning C6-C24 fatty acids are well hydrolyzed, and Cers with mono unsaturated fatty acids are much more hydrolyzed than those with saturated fatty acids. The polypeptide is Neutral ceramidase (Mycobacterium tuberculosis (strain ATCC 25618 / H37Rv)).